Reading from the N-terminus, the 291-residue chain is Tryptophan 2,3-dioxygenase (291 aa).

Residues 51–55, tyrosine 113, and arginine 117 contribute to the substrate site; that span reads FIIQH. Histidine 240 lines the heme pocket. Threonine 254 serves as a coordination point for substrate.

It belongs to the tryptophan 2,3-dioxygenase family. Homotetramer. It depends on heme as a cofactor.

It catalyses the reaction L-tryptophan + O2 = N-formyl-L-kynurenine. It functions in the pathway amino-acid degradation; L-tryptophan degradation via kynurenine pathway; L-kynurenine from L-tryptophan: step 1/2. Heme-dependent dioxygenase that catalyzes the oxidative cleavage of the L-tryptophan (L-Trp) pyrrole ring and converts L-tryptophan to N-formyl-L-kynurenine. Catalyzes the oxidative cleavage of the indole moiety. The chain is Tryptophan 2,3-dioxygenase from Myxococcus xanthus (strain DK1622).